Here is a 139-residue protein sequence, read N- to C-terminus: Holo-[acyl-carrier-protein] synthase (139 aa).

Residues D8 and E57 each contribute to the Mg(2+) site.

Belongs to the P-Pant transferase superfamily. AcpS family. Requires Mg(2+) as cofactor.

It localises to the cytoplasm. The catalysed reaction is apo-[ACP] + CoA = holo-[ACP] + adenosine 3',5'-bisphosphate + H(+). In terms of biological role, transfers the 4'-phosphopantetheine moiety from coenzyme A to a Ser of acyl-carrier-protein. The polypeptide is Holo-[acyl-carrier-protein] synthase (Rhizobium meliloti (strain 1021) (Ensifer meliloti)).